The chain runs to 755 residues: 1,4-alpha-glucan branching enzyme GlgB (755 aa).

Aspartate 435 serves as the catalytic Nucleophile. The active-site Proton donor is glutamate 488.

This sequence belongs to the glycosyl hydrolase 13 family. GlgB subfamily. As to quaternary structure, monomer.

The enzyme catalyses Transfers a segment of a (1-&gt;4)-alpha-D-glucan chain to a primary hydroxy group in a similar glucan chain.. It functions in the pathway glycan biosynthesis; glycogen biosynthesis. In terms of biological role, catalyzes the formation of the alpha-1,6-glucosidic linkages in glycogen by scission of a 1,4-alpha-linked oligosaccharide from growing alpha-1,4-glucan chains and the subsequent attachment of the oligosaccharide to the alpha-1,6 position. This chain is 1,4-alpha-glucan branching enzyme GlgB, found in Vibrio parahaemolyticus serotype O3:K6 (strain RIMD 2210633).